The following is a 425-amino-acid chain: Histidine--tRNA ligase (425 aa).

Belongs to the class-II aminoacyl-tRNA synthetase family. In terms of assembly, homodimer.

It localises to the cytoplasm. It carries out the reaction tRNA(His) + L-histidine + ATP = L-histidyl-tRNA(His) + AMP + diphosphate + H(+). In Listeria monocytogenes serotype 4b (strain F2365), this protein is Histidine--tRNA ligase.